The chain runs to 267 residues: Cilia- and flagella-associated protein 300 (267 aa).

The protein belongs to the CFAP300 family. As to quaternary structure, interacts with DNAAF2. Expressed in the left-right organiser (LRO) node at 8.25 dpc.

It localises to the cytoplasm. Its subcellular location is the cytoskeleton. The protein localises to the cilium axoneme. Functionally, cilium- and flagellum-specific protein that plays a role in axonemal structure organization and motility. May play a role in outer and inner dynein arm assembly. The chain is Cilia- and flagella-associated protein 300 from Mus musculus (Mouse).